Consider the following 132-residue polypeptide: Small ribosomal subunit protein uS8 (132 aa).

This sequence belongs to the universal ribosomal protein uS8 family. As to quaternary structure, part of the 30S ribosomal subunit. Contacts proteins S5 and S12.

In terms of biological role, one of the primary rRNA binding proteins, it binds directly to 16S rRNA central domain where it helps coordinate assembly of the platform of the 30S subunit. This Mycolicibacterium vanbaalenii (strain DSM 7251 / JCM 13017 / BCRC 16820 / KCTC 9966 / NRRL B-24157 / PYR-1) (Mycobacterium vanbaalenii) protein is Small ribosomal subunit protein uS8.